The following is a 366-amino-acid chain: ABI gene family member 3 (366 aa).

Residues 33–61 (CEDNYVQATDKRKALEETMAFTTQALASV) are a coiled coil. Residues 161–195 (SRTGTLSRKSIKAPATPASATLGRPPRIPEPVHLP) are disordered. Phosphoserine is present on residues serine 213 and serine 216. Residues 215–302 (GSAEGVGGAP…PPPGFGPDEP (88 aa)) are disordered. A compositionally biased stretch (pro residues) spans 232–248 (PPAPPLPSSLDPPPPPA). The 59-residue stretch at 308–366 (SYLEKVVTLYPYTSQKDNELSFSEGTVICVTRRYSDGWCEGVSSEGTGFFPGNYVEPSC) folds into the SH3 domain. A Phosphoserine modification is found at serine 342.

This sequence belongs to the ABI family. May interact with PAK1 and PAK2. Probably interacts with TARSH. As to expression, expressed in heart, lung, liver, pancreas, kidney, placenta and at low levels in brain and skeletal muscle.

The protein resides in the cytoplasm. Its function is as follows. May inhibit tumor metastasis. In vitro, reduces cell motility. The chain is ABI gene family member 3 (ABI3) from Homo sapiens (Human).